A 466-amino-acid chain; its full sequence is Cysteine--tRNA ligase (466 aa).

Cys27 is a Zn(2+) binding site. The short motif at 29–39 (PTVYDDAHLGH) is the 'HIGH' region element. 3 residues coordinate Zn(2+): Cys208, His238, and Glu242. A 'KMSKS' region motif is present at residues 270–274 (KMSKS). ATP is bound at residue Lys273.

This sequence belongs to the class-I aminoacyl-tRNA synthetase family. As to quaternary structure, monomer. Requires Zn(2+) as cofactor.

Its subcellular location is the cytoplasm. It carries out the reaction tRNA(Cys) + L-cysteine + ATP = L-cysteinyl-tRNA(Cys) + AMP + diphosphate. This is Cysteine--tRNA ligase from Sulfurimonas denitrificans (strain ATCC 33889 / DSM 1251) (Thiomicrospira denitrificans (strain ATCC 33889 / DSM 1251)).